The primary structure comprises 356 residues: MRIVFKIGSNLLETDEGDIDLSFLSKLAEGIKKLHSFGDKVLIVSSGAVLSGAKKLGIKEKPKDLTLKQALASVGQSYLMHLYDTIFSNYGLKVGQVLLTKDVFSKEKEERFKNAKSTLEKLLELGVVPVINENDAVAVEELVFGDNDFLAVYVSFMVNADLLVIFSSAGGLKDDKDRIIPVVEDIEKVFKYVRGTGTSFGTGGMRSKLEATRLATTLNIPVIITSKEENILDLRNLKTKGTLFKPSKRKLRNALKVIATLEEPKGIIVVDRGAQEALKAGKSLLPAGVVSVQGNFKRGDVVSIQNEEGLIIGKGKVNFSSEEIEKIKGLKTSEVRKLLNTTKDEVIHRDNMVIFL.

K6 lines the ATP pocket. Residues S46, D135, and N147 each contribute to the substrate site. 202 to 208 (TGGMRSK) contacts ATP. Residues 265–342 (KGIIVVDRGA…SEVRKLLNTT (78 aa)) form the PUA domain.

It belongs to the glutamate 5-kinase family.

The protein localises to the cytoplasm. It catalyses the reaction L-glutamate + ATP = L-glutamyl 5-phosphate + ADP. The protein operates within amino-acid biosynthesis; L-proline biosynthesis; L-glutamate 5-semialdehyde from L-glutamate: step 1/2. Functionally, catalyzes the transfer of a phosphate group to glutamate to form L-glutamate 5-phosphate. The polypeptide is Glutamate 5-kinase (Aquifex aeolicus (strain VF5)).